The sequence spans 139 residues: MAVERTFSMIKPEGVRRGLVGAILARLEQKGYRIVALKMLRLTPEMAAAHYAEHRDKPFYQDLINHITSGPVVAMVLEGPGVIAGLRRLMGATNPQEAAPGTIRGDFALETSDNVIHGADSPASAEREIALYFTPAELG.

The ATP site is built by lysine 11, phenylalanine 59, arginine 87, threonine 93, arginine 104, and asparagine 114. Catalysis depends on histidine 117, which acts as the Pros-phosphohistidine intermediate.

The protein belongs to the NDK family. Homotetramer. Requires Mg(2+) as cofactor.

The protein resides in the cytoplasm. The catalysed reaction is a 2'-deoxyribonucleoside 5'-diphosphate + ATP = a 2'-deoxyribonucleoside 5'-triphosphate + ADP. It carries out the reaction a ribonucleoside 5'-diphosphate + ATP = a ribonucleoside 5'-triphosphate + ADP. In terms of biological role, major role in the synthesis of nucleoside triphosphates other than ATP. The ATP gamma phosphate is transferred to the NDP beta phosphate via a ping-pong mechanism, using a phosphorylated active-site intermediate. The polypeptide is Nucleoside diphosphate kinase (Moorella thermoacetica (strain ATCC 39073 / JCM 9320)).